A 143-amino-acid polypeptide reads, in one-letter code: uncharacterized protein (143 aa).

This sequence belongs to the OsmC/Ohr family.

This is an uncharacterized protein from Acinetobacter baylyi (strain ATCC 33305 / BD413 / ADP1).